Here is a 440-residue protein sequence, read N- to C-terminus: Chromosome partition protein MukF (440 aa).

Positions 208–236 (LSETSGTLRELQDTLEAAGDKLQANLLRI) are leucine-zipper.

The protein belongs to the MukF family. As to quaternary structure, interacts, and probably forms a ternary complex, with MukE and MukB via its C-terminal region. The complex formation is stimulated by calcium or magnesium. It is required for an interaction between MukE and MukB.

The protein localises to the cytoplasm. Its subcellular location is the nucleoid. Involved in chromosome condensation, segregation and cell cycle progression. May participate in facilitating chromosome segregation by condensation DNA from both sides of a centrally located replisome during cell division. Not required for mini-F plasmid partitioning. Probably acts via its interaction with MukB and MukE. Overexpression results in anucleate cells. It has a calcium binding activity. This chain is Chromosome partition protein MukF, found in Citrobacter koseri (strain ATCC BAA-895 / CDC 4225-83 / SGSC4696).